A 394-amino-acid polypeptide reads, in one-letter code: Upstream-binding factor 1-like protein 1 (394 aa).

Residues 101–169 (PKRPLTAYLR…DFQKKMRQFK (69 aa)) constitute a DNA-binding region (HMG box 1). Basic residues predominate over residues 167-180 (QFKKRHPVSGHPKK). A disordered region spans residues 167-197 (QFKKRHPVSGHPKKSVVPQSHPTKVPTKSQG). Positions 183–197 (VPQSHPTKVPTKSQG) are enriched in polar residues. Positions 225-291 (RKPPMNAYHK…QYRVKLDLWL (67 aa)) form a DNA-binding region, HMG box 2. Residues 305 to 394 (AKATCGKRKN…SDSSSTDEDD (90 aa)) are disordered.

The protein resides in the cytoplasm. The protein localises to the nucleus. In terms of biological role, essential for proliferation of the inner cell mass and trophectodermal cells in peri-implantation development. In Mus musculus (Mouse), this protein is Upstream-binding factor 1-like protein 1.